The sequence spans 170 residues: Adenine phosphoribosyltransferase (170 aa).

The protein belongs to the purine/pyrimidine phosphoribosyltransferase family. As to quaternary structure, homodimer.

It localises to the cytoplasm. The enzyme catalyses AMP + diphosphate = 5-phospho-alpha-D-ribose 1-diphosphate + adenine. It functions in the pathway purine metabolism; AMP biosynthesis via salvage pathway; AMP from adenine: step 1/1. In terms of biological role, catalyzes a salvage reaction resulting in the formation of AMP, that is energically less costly than de novo synthesis. The polypeptide is Adenine phosphoribosyltransferase (Mycoplasma mycoides subsp. mycoides SC (strain CCUG 32753 / NCTC 10114 / PG1)).